Here is a 505-residue protein sequence, read N- to C-terminus: Maturase K (505 aa).

This sequence belongs to the intron maturase 2 family. MatK subfamily.

Its subcellular location is the plastid. The protein localises to the chloroplast. Functionally, usually encoded in the trnK tRNA gene intron. Probably assists in splicing its own and other chloroplast group II introns. The protein is Maturase K of Froelichia floridana (Florida snake-cotton).